Reading from the N-terminus, the 462-residue chain is Probable threonine/serine transporter YbxG (462 aa).

A run of 12 helical transmembrane segments spans residues 17-37 (MIAL…STIS), 38-58 (WTGP…FFIM), 89-109 (ITAW…IIAV), 121-141 (PAWI…LISV), 154-174 (IKIV…FFGF), 190-210 (GGFF…VIAA), 238-258 (IIWR…TVYP), 276-296 (IGIT…AMSG), 331-351 (LYGT…NYIA), 355-375 (IFVY…FIIL), 398-418 (FAPF…VGMW), and 427-447 (LIVG…FGIG).

The protein belongs to the amino acid-polyamine-organocation (APC) superfamily.

The protein localises to the cell membrane. In terms of biological role, probable threonine transporter. Is also active as a minor serine permease. This Bacillus subtilis (strain 168) protein is Probable threonine/serine transporter YbxG (ybxG).